An 877-amino-acid polypeptide reads, in one-letter code: Leucine--tRNA ligase (877 aa).

The short motif at 43–53 (PYPSGRIHMGH) is the 'HIGH' region element. Residues 628–632 (KMSKS) carry the 'KMSKS' region motif. Lys631 is an ATP binding site.

It belongs to the class-I aminoacyl-tRNA synthetase family.

The protein resides in the cytoplasm. The catalysed reaction is tRNA(Leu) + L-leucine + ATP = L-leucyl-tRNA(Leu) + AMP + diphosphate. The protein is Leucine--tRNA ligase of Brucella melitensis biotype 2 (strain ATCC 23457).